The chain runs to 204 residues: Leucyl/phenylalanyl-tRNA--protein transferase (204 aa).

This sequence belongs to the L/F-transferase family.

Its subcellular location is the cytoplasm. It catalyses the reaction N-terminal L-lysyl-[protein] + L-leucyl-tRNA(Leu) = N-terminal L-leucyl-L-lysyl-[protein] + tRNA(Leu) + H(+). The enzyme catalyses N-terminal L-arginyl-[protein] + L-leucyl-tRNA(Leu) = N-terminal L-leucyl-L-arginyl-[protein] + tRNA(Leu) + H(+). It carries out the reaction L-phenylalanyl-tRNA(Phe) + an N-terminal L-alpha-aminoacyl-[protein] = an N-terminal L-phenylalanyl-L-alpha-aminoacyl-[protein] + tRNA(Phe). In terms of biological role, functions in the N-end rule pathway of protein degradation where it conjugates Leu, Phe and, less efficiently, Met from aminoacyl-tRNAs to the N-termini of proteins containing an N-terminal arginine or lysine. In Brucella abortus (strain 2308), this protein is Leucyl/phenylalanyl-tRNA--protein transferase.